The sequence spans 690 residues: UvrABC system protein B (690 aa).

The 159-residue stretch at 30–188 (QGVMDGQTNQ…QELISLHFVR (159 aa)) folds into the Helicase ATP-binding domain. Position 43–50 (43–50 (GVTGSGKT)) interacts with ATP. The Beta-hairpin signature appears at 96–119 (YYDFYQPEAYIPTMDKYIAKDLKI). The 167-residue stretch at 435–601 (QIDDLLEEIR…SIVKSVDQVL (167 aa)) folds into the Helicase C-terminal domain. Residues 641–676 (YAMAEELRLEMQEAAESMEFEKAAYLRDEVTKLEDA) enclose the UVR domain.

It belongs to the UvrB family. Forms a heterotetramer with UvrA during the search for lesions. Interacts with UvrC in an incision complex.

It localises to the cytoplasm. Functionally, the UvrABC repair system catalyzes the recognition and processing of DNA lesions. A damage recognition complex composed of 2 UvrA and 2 UvrB subunits scans DNA for abnormalities. Upon binding of the UvrA(2)B(2) complex to a putative damaged site, the DNA wraps around one UvrB monomer. DNA wrap is dependent on ATP binding by UvrB and probably causes local melting of the DNA helix, facilitating insertion of UvrB beta-hairpin between the DNA strands. Then UvrB probes one DNA strand for the presence of a lesion. If a lesion is found the UvrA subunits dissociate and the UvrB-DNA preincision complex is formed. This complex is subsequently bound by UvrC and the second UvrB is released. If no lesion is found, the DNA wraps around the other UvrB subunit that will check the other stand for damage. This Chlorobium phaeobacteroides (strain BS1) protein is UvrABC system protein B.